The following is a 410-amino-acid chain: Provicilin (410 aa).

Positions 1–15 (MLLAIAFLASVCVSS) are cleaved as a signal peptide. Residues 23–181 (FIFKSNRFQT…AFNTNYEEIE (159 aa)) form the Cupin type-1 1 domain. Disordered stretches follow at residues 223 to 242 (SKNAKSSSKKSVSSESGPFN) and 312 to 331 (QRNENQGKENDKEEEQEEET). Residues 225–238 (NAKSSSKKSVSSES) are compositionally biased toward low complexity. A Cupin type-1 2 domain is found at 241–409 (FNLRSRNPIY…AFPGSSHEVD (169 aa)). N359 carries an N-linked (GlcNAc...) asparagine glycan.

It belongs to the 7S seed storage protein family.

The protein resides in the vacuole. Its subcellular location is the aleurone grain. Functionally, seed storage protein. The polypeptide is Provicilin (Pisum sativum (Garden pea)).